Reading from the N-terminus, the 506-residue chain is Glutamate--tRNA ligase (506 aa).

Residues 21 to 31 (PSPTGIPHVGM) carry the 'HIGH' region motif. The 'KMSKS' region signature appears at 265–269 (KLSKR). K268 serves as a coordination point for ATP.

Belongs to the class-I aminoacyl-tRNA synthetase family. Glutamate--tRNA ligase type 1 subfamily. Monomer.

Its subcellular location is the cytoplasm. The enzyme catalyses tRNA(Glu) + L-glutamate + ATP = L-glutamyl-tRNA(Glu) + AMP + diphosphate. Catalyzes the attachment of glutamate to tRNA(Glu) in a two-step reaction: glutamate is first activated by ATP to form Glu-AMP and then transferred to the acceptor end of tRNA(Glu). This is Glutamate--tRNA ligase from Bifidobacterium adolescentis (strain ATCC 15703 / DSM 20083 / NCTC 11814 / E194a).